Here is a 466-residue protein sequence, read N- to C-terminus: Proline--tRNA ligase (466 aa).

This sequence belongs to the class-II aminoacyl-tRNA synthetase family. ProS type 3 subfamily. In terms of assembly, homodimer.

The protein localises to the cytoplasm. It catalyses the reaction tRNA(Pro) + L-proline + ATP = L-prolyl-tRNA(Pro) + AMP + diphosphate. Catalyzes the attachment of proline to tRNA(Pro) in a two-step reaction: proline is first activated by ATP to form Pro-AMP and then transferred to the acceptor end of tRNA(Pro). The polypeptide is Proline--tRNA ligase (Picrophilus torridus (strain ATCC 700027 / DSM 9790 / JCM 10055 / NBRC 100828 / KAW 2/3)).